A 273-amino-acid chain; its full sequence is DnaJ homolog subfamily C member 27 (273 aa).

Residues 1–18 (MESNVPKRKEPLKSLRIK) form a required for interaction with MAPK1 region. Residues 23 to 30 (GNAEVGKS), 71 to 75 (DMAGH), and 134 to 137 (NKID) contribute to the GTP site. Residues 217–273 (DSWEMLGVRPGASREEVNKAYRKLAVLLHPDKCVAPGSEDAFKAVVNARTALLKNIK) enclose the J domain.

This sequence belongs to the small GTPase superfamily. Rab family. As to quaternary structure, interacts directly with MAPK1 (wild-type and kinase-deficient forms). Interacts directly (in GTP-bound form) with MAP2K1 (wild-type and kinase-deficient forms).

The protein localises to the nucleus. Its function is as follows. GTPase which can activate the MEK/ERK pathway and induce cell transformation when overexpressed. May act as a nuclear scaffold for MAPK1, probably by association with MAPK1 nuclear export signal leading to enhanced ERK1/ERK2 signaling. The protein is DnaJ homolog subfamily C member 27 (Dnajc27) of Rattus norvegicus (Rat).